A 509-amino-acid polypeptide reads, in one-letter code: Cytochrome P450 monooxygenase traB (509 aa).

Residues 8–28 (LVELVSITGGLIVLFIAYTGF) form a helical membrane-spanning segment. Position 453 (cysteine 453) interacts with heme.

This sequence belongs to the cytochrome P450 family. Requires heme as cofactor.

It is found in the membrane. It participates in secondary metabolite biosynthesis. Its function is as follows. Cytochrome P450 monooxygenase; part of the tra gene cluster that produces terrestric acid. The clavatol biosynthesis cluster cla and the terrestric acid cluster tra are both involved in the production of peniphenones and penilactones. The non-reducing PKS claF is responsible for the formation of clavatol from successive condensations of 3 malonyl-CoA units, presumably with a simple acetyl-CoA starter unit, and 2 methylation steps. The esterase claE probably collaborates with claF by catalyzing the hydrolysis of ACP-bound acyl intermediates to free the ACP from stalled intermediates. The clavatol oxidase claD then converts clavatol to hydroxyclavatol. Spontaneous dehydration of hydroxyclavatol leads to the accumulation of the highly active ortho-quinone methide. On the other hand, the PKS-NRPS hybrid traA is involved in the formation of crustosic acid, with the help of traB and traD. The polyketide synthase module (PKS) of traA is responsible for the synthesis of the polyketide backbone via the condensation of an acetyl-CoA starter unit with 3 malonyl-CoA units. The downstream nonribosomal peptide synthetase (NRPS) module then amidates the carboxyl end of the polyketide with L-malic acid. Because traA lacks a designated enoylreductase (ER) domain, the required activity is provided the enoyl reductase traG. Crustosic acid undergoes decarboxylation and isomerization to the terrestric acid, catalyzed by the 2-oxoglutarate-dependent dioxygenase traH. Both acids are further converted to the 2 gamma-butyrolactones (R)-5-methyltetronic acid and (S)-5-carboxylmethyltetronic acid, with involvement of the cytochrome P450 monooxygenase claJ. Spontaneous addition of the methide to these gamma-butyrolactones leads to peniphenone D and penilactone D, which undergo again stereospecific attacking by methide to give penilactones A and B. This Penicillium crustosum (Blue mold fungus) protein is Cytochrome P450 monooxygenase traB.